A 353-amino-acid polypeptide reads, in one-letter code: Melanin-concentrating hormone receptor 1 (353 aa).

The interval Met1–Gly28 is disordered. The Extracellular segment spans residues Met1–Ser45. A compositionally biased stretch (polar residues) spans Pro12–Ser26. N-linked (GlcNAc...) asparagine glycosylation is found at Asn13, Asn16, and Asn23. The chain crosses the membrane as a helical span at residues Val46–Val66. Residues Lys67–Asp79 lie on the Cytoplasmic side of the membrane. The chain crosses the membrane as a helical span at residues Ile80–Ile100. Over His101–Cys116 the chain is Extracellular. Cys116 and Cys194 are joined by a disulfide. A helical membrane pass occupies residues Thr117–Ile139. Topologically, residues Asp140–Thr161 are cytoplasmic. Residues Leu162 to Ala182 form a helical membrane-spanning segment. At Arg183–Asp204 the chain is on the extracellular side. A helical transmembrane segment spans residues Leu205–Thr225. Residues Ala226–Arg256 are Cytoplasmic-facing. A helical transmembrane segment spans residues Thr257 to Leu277. At Thr278 to Asn294 the chain is on the extracellular side. The helical transmembrane segment at Ala295–Cys315 threads the bilayer. The Cytoplasmic segment spans residues Glu316–Thr353.

It belongs to the G-protein coupled receptor 1 family. In terms of assembly, interacts with NCDN.

The protein localises to the cell membrane. Receptor for melanin-concentrating hormone, coupled to both G proteins that inhibit adenylyl cyclase and G proteins that activate phosphoinositide hydrolysis. This Sus scrofa (Pig) protein is Melanin-concentrating hormone receptor 1.